The chain runs to 172 residues: Ribosome maturation factor RimM (172 aa).

Positions 96-168 (EGEFYYHQII…RVDVELMEGL (73 aa)) constitute a PRC barrel domain.

This sequence belongs to the RimM family. As to quaternary structure, binds ribosomal protein uS19.

The protein localises to the cytoplasm. In terms of biological role, an accessory protein needed during the final step in the assembly of 30S ribosomal subunit, possibly for assembly of the head region. Essential for efficient processing of 16S rRNA. May be needed both before and after RbfA during the maturation of 16S rRNA. It has affinity for free ribosomal 30S subunits but not for 70S ribosomes. The sequence is that of Ribosome maturation factor RimM from Streptococcus pyogenes serotype M1.